Reading from the N-terminus, the 123-residue chain is Modulator protein MzrA (123 aa).

Topologically, residues 1–8 (MIKRPRWQ) are cytoplasmic. Residues 9–29 (YVLLIALALLALATLLVPCMV) traverse the membrane as a helical segment. The Periplasmic portion of the chain corresponds to 30–123 (RTESELRIRA…EFARAPLNLG (94 aa)).

The protein belongs to the MzrA family. As to quaternary structure, interacts with EnvZ.

It localises to the cell inner membrane. Its function is as follows. Modulates the activity of the EnvZ/OmpR two-component regulatory system, probably by directly modulating EnvZ enzymatic activity and increasing stability of phosphorylated OmpR. The protein is Modulator protein MzrA of Serratia proteamaculans (strain 568).